The following is a 128-amino-acid chain: UPF0325 protein YaeH (128 aa).

Belongs to the UPF0325 family.

The polypeptide is UPF0325 protein YaeH (Salmonella agona (strain SL483)).